A 69-amino-acid polypeptide reads, in one-letter code: Alpha-conotoxin Mr1.7a (69 aa).

An N-terminal signal peptide occupies residues 1–21 (MGMRMMFTVFLLVVLATTVVS). Residues 22 to 49 (FTSNRVLDPAFRRRNAAAKASDLIALNA) constitute a propeptide that is removed on maturation. Residues P52 and P58 each carry the 4-hydroxyproline; in Mr1.7b modification. Intrachain disulfides connect C54-C60 and C55-C68. The lacks the Ser-Xaa-Pro motif that is crucial for potent interaction with nAChR stretch occupies residues 56–58 (THP). C68 bears the Cysteine amide mark.

The protein belongs to the conotoxin A superfamily. In terms of processing, two 4-hydroxyprolines have been detected by MS but the assignment of which of the three prolines is modified is uncertain. In terms of tissue distribution, expressed by the venom duct.

The protein resides in the secreted. Acts as a co-agonist with PNU (an alpha-7 nAChR-selective allosteric modulator) at the endogenous alpha-7/CHRNA7 nicotinic acetylcholine receptors (nAChR) when tested in human SH-SY5Y neuroblastoma cells. Is the third alpha-conotoxin that acts as an agonist (after alpha-conotoxin SrIA/SrIB). Also acts as an antagonist at human alpha-7 nAChRs heterologously expressed in Xenopus oocytes. Has possibly a distinct nAChR binding mode from other alpha-conotoxins, due to a different three residue motif (lacks the Ser-Xaa-Pro motif). Functionally, acts as a weak partial agonist at alpha-7/CHRNA7 nicotinic acetylcholine receptors (nAChR) when tested in human SH-SY5Y neuroblastoma cells. Has possibly a distinct nAChR binding mode from other alpha-conotoxins, due to a different three residue motif (lacks the Ser-Xaa-Pro motif). The sequence is that of Alpha-conotoxin Mr1.7a from Conus marmoreus (Marble cone).